We begin with the raw amino-acid sequence, 718 residues long: MQMGVAVLVLVIACGVVSVLFAIWAIRSVLAADQGTQRMQEIAEAIREGASAYLTRQYSTIAIVGVVVFLAAWYLLSISAAIGFLIGAVLSGVTGFIGMHVSVRANVRTAQAASLSLAGGLELAFKSGAITGLLVAGLALLGVSVYYFILTVWLGYSPSDRTVIDALVSLGFGASLISIFARLGGGIFTKGADVGGDLVGKVEAGIPEDDPRNPATIADNVGDNVGDCAGMAADLFETYAVTVVATMVLGAIFFNGSDILSSVMLYPLMICGACVITSIVGTFFVKLGVNGSIMGALYKGLIATGLLSIVGLAIANTLTVGWGEIGTVAGKSITGTNLFLCGLIGLIVTGLIVVITEYYTGTNKRPVNSIAQASVTGHGTNVIQGLAVSLESTALPAIVIVGGIISTYQLAGLFGTAIAVTAMLGIAGMIVALDAFGPVTDNAGGIAEMAGLDPEVRKATDALDAVGNTTKAVTKGYAIGSAGLGALVLFAAYSNDLAYFAANGQTYPYFADMGPVSFDLSNPYVVAGLIFGGLIPYLFGGMAMTAVGRAGGAVVQEVRRQFREKPGIMTGKERPDYARAVDLLTRAAIREMIIPSLLPVLAPIVVYFGVLLISGSKAAAFAALGASLLGVIVNGLFVAISMTSGGGAWDNAKKSFEDGFTDADGVKHLKGSEAHKASVTGDTVGDPYKDTAGPAVNPAIKITNIVALLLLAVLAHMS.

Transmembrane regions (helical) follow at residues 6 to 26 (AVLVLVIACGVVSVLFAIWAI), 54 to 76 (LTRQYSTIAIVGVVVFLAAWYLL), 81 to 103 (AIGFLIGAVLSGVTGFIGMHVSV), 112 to 132 (AASLSLAGGLELAFKSGAITG), 133 to 153 (LLVAGLALLGVSVYYFILTVW), and 168 to 188 (VSLGFGASLISIFARLGGGIF). Position 190 (Lys-190) interacts with substrate. Mg(2+) is bound by residues Asp-193, Asp-197, Asn-220, and Asp-223. A run of 6 helical transmembrane segments spans residues 240 to 260 (AVTVVATMVLGAIFFNGSDIL), 265 to 285 (LYPLMICGACVITSIVGTFFV), 300 to 320 (GLIATGLLSIVGLAIANTLTV), 335 to 355 (GTNLFLCGLIGLIVTGLIVVI), 385 to 405 (GLAVSLESTALPAIVIVGGII), and 413 to 433 (LFGTAIAVTAMLGIAGMIVAL). Residue Asp-441 coordinates Mg(2+). A run of 4 helical transmembrane segments spans residues 472 to 492 (AVTKGYAIGSAGLGALVLFAA), 524 to 544 (YVVAGLIFGGLIPYLFGGMAM), 593 to 613 (IIPSLLPVLAPIVVYFGVLLI), and 620 to 640 (AFAALGASLLGVIVNGLFVAI). Ca(2+)-binding residues include Asp-650, Asp-682, and Asp-686. Substrate is bound at residue Lys-689. The chain crosses the membrane as a helical span at residues 695–715 (AVNPAIKITNIVALLLLAVLA).

This sequence belongs to the H(+)-translocating pyrophosphatase (TC 3.A.10) family. K(+)-insensitive subfamily. As to quaternary structure, homodimer. Mg(2+) is required as a cofactor.

It localises to the cell inner membrane. The catalysed reaction is diphosphate + H2O + H(+)(in) = 2 phosphate + 2 H(+)(out). Its function is as follows. Proton pump that utilizes the energy of pyrophosphate hydrolysis as the driving force for proton movement across the membrane. Generates a proton motive force. In Brucella anthropi (strain ATCC 49188 / DSM 6882 / CCUG 24695 / JCM 21032 / LMG 3331 / NBRC 15819 / NCTC 12168 / Alc 37) (Ochrobactrum anthropi), this protein is K(+)-insensitive pyrophosphate-energized proton pump.